The following is a 147-amino-acid chain: Histone-lysine N-methyltransferase, H3 lysine-37 specific (147 aa).

Positions 8–116 (SPLEIRDTER…TNEELCISYG (109 aa)) constitute an SET domain.

Belongs to the class V-like SAM-binding methyltransferase superfamily. As to quaternary structure, homodimer.

The protein resides in the cytoplasm. The protein localises to the nucleus. It catalyses the reaction L-lysyl(37)-[histone H3] + S-adenosyl-L-methionine = N(6)-methyl-L-lysyl(37)-[histone H3] + S-adenosyl-L-homocysteine + H(+). The enzyme catalyses N(6)-methyl-L-lysyl(37)-[histone H3] + S-adenosyl-L-methionine = N(6),N(6)-dimethyl-L-lysyl(37)-[histone H3] + S-adenosyl-L-homocysteine + H(+). It carries out the reaction N(6),N(6)-dimethyl-L-lysyl(37)-[histone H3] + S-adenosyl-L-methionine = N(6),N(6),N(6)-trimethyl-L-lysyl(37)-[histone H3] + S-adenosyl-L-homocysteine + H(+). In terms of biological role, histone lysine methyltransferase that specifically mono-, di-, and trimethylates 'Lys-37' of histone H3 to regulate sporulation. This is Histone-lysine N-methyltransferase, H3 lysine-37 specific from Schizosaccharomyces pombe (strain 972 / ATCC 24843) (Fission yeast).